A 473-amino-acid chain; its full sequence is FAD-dependent oxidoreductase dpasF (473 aa).

The signal sequence occupies residues 1 to 21 (MNRLLASALLVGSAVVAPVSA). N-linked (GlcNAc...) asparagine glycans are attached at residues Asn26, Asn54, Asn92, Asn133, Asn185, Asn276, and Asn401.

This sequence belongs to the beta-cyclopiazonate dehydrogenase family. Requires FAD as cofactor.

The protein operates within secondary metabolite biosynthesis; terpenoid biosynthesis. Its function is as follows. FAD-dependent oxidoreductase; part of the gene cluster that mediates the biosynthesis of the diterpenoid pyrones subglutinols A and B. The first step of the pathway is the synthesis of the alpha-pyrone moiety by the polyketide synthase dpasA via condensation of one acetyl-CoA starter unit with 3 malonyl-CoA units and 2 methylations. The alpha-pyrone is then combined with geranylgeranyl pyrophosphate (GGPP) formed by the GGPP synthase dpasD through the action of the prenyltransferase dpasC to yield a linear alpha-pyrone diterpenoid. Subsequent steps in the diterpenoid pyrone biosynthetic pathway involve the decalin core formation, which is initiated by the epoxidation of the C10-C11 olefin by the FAD-dependent oxidoreductase dpasE, and is followed by a cyclization cascade catalyzed by the terpene cyclase dpasB. The FAD-linked oxidoreductase dpasF is then involved in tetrahydrofuran (THF) ring formation at the C5 unit to complete the formation of subglutinols A and B. DpasF possesses also an additional catalytic ability of multi-step oxidations to generate a new DDP analog with an enone system at the C5 named FDDP A. This chain is FAD-dependent oxidoreductase dpasF, found in Apiospora sacchari (Arthrinium sacchari).